A 665-amino-acid chain; its full sequence is Mitochondrial Rho GTPase 1 (665 aa).

The Cytoplasmic segment spans residues 1–634 (MTNDVIRIVV…NQDPEEETNT (634 aa)). A Miro 1 domain is found at 3–177 (NDVIRIVVCG…FYLCQKAVMH (175 aa)). Residues 12-19 (GDEGVGKS), 61-67 (DTQFSNS), and 119-122 (NVFD) each bind GTP. EF-hand domains are found at residues 193–228 (NAVAALQRVFFLSDRDQDGYLSDQEMLELQVKCFGR) and 313–348 (EGYRFLVDLFLLFDKDNDGGLNDSELKTLFKPTPGI). Residues Asp206, Asp208, Asp210, Tyr212, Glu217, Asp326, Asp328, Asp330, and Glu337 each contribute to the Ca(2+) site. A Miro 2 domain is found at 452 to 618 (RSVFNCFVLG…FIQLAEAAQQ (167 aa)). GTP-binding positions include 461–468 (GSHMSGKT), 498–502 (EMTGG), and 567–570 (LKAD). The chain crosses the membrane as a helical; Anchor for type IV membrane protein span at residues 635–655 (IMPFALAGGATVLLAAAVAWI). Residues 656-665 (FKNVRVAGRE) are Mitochondrial intermembrane-facing.

This sequence belongs to the mitochondrial Rho GTPase family.

Its subcellular location is the mitochondrion outer membrane. Mitochondrial GTPase involved in mitochondrial trafficking. Probably involved in control of anterograde transport of mitochondria and their subcellular distribution. The sequence is that of Mitochondrial Rho GTPase 1 (GEM1) from Yarrowia lipolytica (strain CLIB 122 / E 150) (Yeast).